Reading from the N-terminus, the 230-residue chain is NADH dehydrogenase [ubiquinone] iron-sulfur protein 8, mitochondrial (230 aa).

Residues 1–42 constitute a mitochondrion transit peptide; sequence MAAILARKSLSALRSRQLVLAGQAWQQGANTSNGTLLGTRTF. 4Fe-4S ferredoxin-type domains lie at 122–151 and 161–190; these read RRYPTGEERCIACKLCEAICPAQAITIEAE and TRYDIDMTKCIYCGFCQEACPVDAIVEGPN. 8 residues coordinate [4Fe-4S] cluster: cysteine 131, cysteine 134, cysteine 137, cysteine 141, cysteine 170, cysteine 173, cysteine 176, and cysteine 180.

This sequence belongs to the complex I 23 kDa subunit family. Complex I is composed of about 45 different subunits. This is a component of the iron-sulfur (IP) fragment of the enzyme. The cofactor is [4Fe-4S] cluster.

The protein resides in the mitochondrion. The enzyme catalyses a ubiquinone + NADH + 5 H(+)(in) = a ubiquinol + NAD(+) + 4 H(+)(out). Its function is as follows. Core subunit of the mitochondrial membrane respiratory chain NADH dehydrogenase (Complex I) that is believed to belong to the minimal assembly required for catalysis. Complex I functions in the transfer of electrons from NADH to the respiratory chain. The immediate electron acceptor for the enzyme is believed to be ubiquinone. May donate electrons to ubiquinone. This Nicotiana tabacum (Common tobacco) protein is NADH dehydrogenase [ubiquinone] iron-sulfur protein 8, mitochondrial.